A 358-amino-acid polypeptide reads, in one-letter code: Putative myc-like protein MYCLP1 (358 aa).

2 disordered regions span residues Ala150–Lys171 and Gln219–Asp245. Residues Pro227 to Asp242 show a composition bias toward basic and acidic residues. A bHLH domain is found at Trp274–Glu326.

As to quaternary structure, efficient DNA binding requires dimerization with another bHLH protein. Binds DNA as a heterodimer with MAX. As to expression, detected in adult testis.

It is found in the nucleus. This chain is Putative myc-like protein MYCLP1 (MYCLP1), found in Homo sapiens (Human).